The sequence spans 99 residues: Large ribosomal subunit protein eL21 (99 aa).

The protein belongs to the eukaryotic ribosomal protein eL21 family.

This Staphylothermus marinus (strain ATCC 43588 / DSM 3639 / JCM 9404 / F1) protein is Large ribosomal subunit protein eL21.